The primary structure comprises 901 residues: HTH-type transcriptional regulator MalT (901 aa).

Position 39-46 (39-46 (SPAGYGKT)) interacts with ATP. In terms of domain architecture, HTH luxR-type spans 829–894 (ELIRTSPLTQ…DAVQHAQQLL (66 aa)). The segment at residues 853 to 872 (NEQIAGELAVAATTIKTHIR) is a DNA-binding region (H-T-H motif).

It belongs to the MalT family. Monomer in solution. Oligomerizes to an active state in the presence of the positive effectors ATP and maltotriose.

Activated by ATP and maltotriose, which are both required for DNA binding. Functionally, positively regulates the transcription of the maltose regulon whose gene products are responsible for uptake and catabolism of malto-oligosaccharides. Specifically binds to the promoter region of its target genes, recognizing a short DNA motif called the MalT box. The sequence is that of HTH-type transcriptional regulator MalT from Enterobacter sp. (strain 638).